A 96-amino-acid chain; its full sequence is UPF0235 protein Helmi_20270 (96 aa).

It belongs to the UPF0235 family.

The sequence is that of UPF0235 protein Helmi_20270 from Heliobacterium modesticaldum (strain ATCC 51547 / Ice1).